A 342-amino-acid polypeptide reads, in one-letter code: Cytochrome c oxidase subunit 2 (342 aa).

The first 22 residues, 1 to 22, serve as a signal peptide directing secretion; the sequence is MKLWKTASRFLPLSFLTLFLTG. Residue Cys23 is the site of N-palmitoyl cysteine attachment. A lipid anchor (S-diacylglycerol cysteine) is attached at Cys23. The Extracellular segment spans residues 23–50; sequence CLGEENLTALDPKGPQAQWIYDNMILSI. Residues 23–249 are cytochrome c oxidase subunit II; that stretch reads CLGEENLTAL…MSAEVEEPTE (227 aa). Residues 51-69 traverse the membrane as a helical segment; sequence IVMALVSIVVFAIFFIILA. Over 70-89 the chain is Cytoplasmic; that stretch reads KYRRKPGDDEIPKQVHGNTA. The helical transmembrane segment at 90 to 108 threads the bilayer; that stretch reads LEITWTVIPIILLVILAVP. Topologically, residues 109–342 are extracellular; that stretch reads TITGTFMFAD…AYLRSLKVME (234 aa). Residues His175, Cys210, Cys214, and His218 each coordinate Cu cation. In terms of domain architecture, Cytochrome c spans 250–342; sequence TLANQGRQVF…AYLRSLKVME (93 aa). The heme c site is built by Cys264, Cys267, His268, and Met317.

Belongs to the cytochrome c oxidase subunit 2 family. Requires Cu cation as cofactor. Heme c is required as a cofactor.

It localises to the cell membrane. It carries out the reaction 4 Fe(II)-[cytochrome c] + O2 + 8 H(+)(in) = 4 Fe(III)-[cytochrome c] + 2 H2O + 4 H(+)(out). In terms of biological role, subunits I and II form the functional core of the enzyme complex. Electrons originating in cytochrome c are transferred via heme a and Cu(A) to the binuclear center formed by heme a3 and Cu(B). In Alkalihalophilus pseudofirmus (strain ATCC BAA-2126 / JCM 17055 / OF4) (Bacillus pseudofirmus), this protein is Cytochrome c oxidase subunit 2 (ctaC).